Here is a 283-residue protein sequence, read N- to C-terminus: Glutamate racemase (283 aa).

Substrate contacts are provided by residues 13-14 (DS) and 45-46 (YG). Residue Cys-76 is the Proton donor/acceptor of the active site. Residue 77–78 (NT) participates in substrate binding. The active-site Proton donor/acceptor is Cys-186. 187 to 188 (TH) lines the substrate pocket.

Belongs to the aspartate/glutamate racemases family.

The catalysed reaction is L-glutamate = D-glutamate. Its pathway is cell wall biogenesis; peptidoglycan biosynthesis. Provides the (R)-glutamate required for cell wall biosynthesis. The chain is Glutamate racemase from Microcystis aeruginosa (strain NIES-843 / IAM M-2473).